Reading from the N-terminus, the 205-residue chain is Methylthioribulose-1-phosphate dehydratase (205 aa).

Residues H96 and H98 each coordinate Zn(2+).

Belongs to the aldolase class II family. MtnB subfamily. It depends on Zn(2+) as a cofactor.

It carries out the reaction 5-(methylsulfanyl)-D-ribulose 1-phosphate = 5-methylsulfanyl-2,3-dioxopentyl phosphate + H2O. The protein operates within amino-acid biosynthesis; L-methionine biosynthesis via salvage pathway; L-methionine from S-methyl-5-thio-alpha-D-ribose 1-phosphate: step 2/6. Its function is as follows. Catalyzes the dehydration of methylthioribulose-1-phosphate (MTRu-1-P) into 2,3-diketo-5-methylthiopentyl-1-phosphate (DK-MTP-1-P). The chain is Methylthioribulose-1-phosphate dehydratase from Pseudomonas paraeruginosa (strain DSM 24068 / PA7) (Pseudomonas aeruginosa (strain PA7)).